The following is a 255-amino-acid chain: Putative ankyrin repeat protein R880 (255 aa).

5 ANK repeats span residues Ser-79 to Tyr-109, Lys-110 to Thr-139, Asp-141 to Lys-169, Arg-171 to Ser-199, and Lys-201 to Val-229.

This chain is Putative ankyrin repeat protein R880, found in Acanthamoeba polyphaga (Amoeba).